We begin with the raw amino-acid sequence, 196 residues long: uncharacterized protein (196 aa).

S-adenosyl-L-methionine is bound by residues 44 to 46 (TTA), G80, V100, and 107 to 109 (PSL).

It belongs to the class IV-like SAM-binding methyltransferase superfamily. RNA methyltransferase TrmH family.

This is an uncharacterized protein from Serratia marcescens.